The primary structure comprises 68 residues: Conotoxin Vx2 (68 aa).

The signal sequence occupies residues 1 to 20 (MMSKLGVLVTICLLLFPLTA). The propeptide occupies 21-47 (LPLDGDQPADHPAKRTQDHNLASPISA). 3 disulfides stabilise this stretch: C55–C68, C56–C61, and C57–C65.

This sequence belongs to the conotoxin M superfamily. In terms of tissue distribution, expressed by the venom duct.

The protein resides in the secreted. In vivo, elicits a series of symptoms, such as being sedative, tail stiffening and twisted jumping, when injected intracranially into mice. This Conus vexillum (Flag cone) protein is Conotoxin Vx2.